Here is a 251-residue protein sequence, read N- to C-terminus: Aliphatic sulfonates import ATP-binding protein SsuB (251 aa).

Residues valine 3–glutamine 231 enclose the ABC transporter domain. Position 39 to 46 (glycine 39 to serine 46) interacts with ATP.

Belongs to the ABC transporter superfamily. Aliphatic sulfonates importer (TC 3.A.1.17.2) family. The complex is composed of two ATP-binding proteins (SsuB), two transmembrane proteins (SsuC) and a solute-binding protein (SsuA).

It localises to the cell membrane. The enzyme catalyses ATP + H2O + aliphatic sulfonate-[sulfonate-binding protein]Side 1 = ADP + phosphate + aliphatic sulfonateSide 2 + [sulfonate-binding protein]Side 1.. In terms of biological role, part of the ABC transporter complex SsuABC involved in aliphatic sulfonates import. Responsible for energy coupling to the transport system. This is Aliphatic sulfonates import ATP-binding protein SsuB from Bacillus cereus (strain ZK / E33L).